The primary structure comprises 488 residues: UDP-glycosyltransferase 73B1 (488 aa).

UDP-alpha-D-glucose contacts are provided by residues Thr-297, 356 to 358 (APQ), 373 to 381 (HCGWNSLLE), and 395 to 398 (GAEQ).

The protein belongs to the UDP-glycosyltransferase family.

Possesses low quercetin 3-O-glucosyltransferase and 7-O-glucosyltransferase activities in vitro. This chain is UDP-glycosyltransferase 73B1 (UGT73B1), found in Arabidopsis thaliana (Mouse-ear cress).